The primary structure comprises 719 residues: Putative alpha-1,3-mannosyltransferase MNT4 (719 aa).

Residues 1-4 (MKFH) are Cytoplasmic-facing. The helical transmembrane segment at 5 to 22 (LKRYVIVTSILLSFFLLF) threads the bilayer. Residues 23 to 719 (RRQFLPLTQR…KKLIEIWLQD (697 aa)) are Lumenal-facing. N-linked (GlcNAc...) asparagine glycans are attached at residues Asn-148, Asn-273, and Asn-449.

This sequence belongs to the MNN1/MNT family.

The protein localises to the golgi apparatus membrane. The protein operates within protein modification; protein glycosylation. Its function is as follows. Responsible for addition of the terminal mannose residues to the outer chain of core N-linked polysaccharides and to O-linked mannotriose. Implicated in late Golgi modifications. The chain is Putative alpha-1,3-mannosyltransferase MNT4 (MNT4) from Candida albicans (strain SC5314 / ATCC MYA-2876) (Yeast).